We begin with the raw amino-acid sequence, 185 residues long: UPF0397 protein LGAS_1499 (185 aa).

5 helical membrane passes run 6–26 (GLSV…VILA), 46–66 (FLAL…GFIG), 78–98 (TWWS…LYGM), 118–138 (VQII…DILI), and 147–167 (FLQG…LGTI).

It belongs to the UPF0397 family.

The protein resides in the cell membrane. The sequence is that of UPF0397 protein LGAS_1499 from Lactobacillus gasseri (strain ATCC 33323 / DSM 20243 / BCRC 14619 / CIP 102991 / JCM 1131 / KCTC 3163 / NCIMB 11718 / NCTC 13722 / AM63).